Consider the following 320-residue polypeptide: Malate dehydrogenase (320 aa).

NAD(+) contacts are provided by residues 10–15 (GAGQIG) and aspartate 34. Substrate contacts are provided by arginine 83 and arginine 89. Residues asparagine 96 and 119 to 121 (ITN) each bind NAD(+). Residues asparagine 121 and arginine 152 each coordinate substrate. The Proton acceptor role is filled by histidine 176.

Belongs to the LDH/MDH superfamily. MDH type 3 family.

The catalysed reaction is (S)-malate + NAD(+) = oxaloacetate + NADH + H(+). Catalyzes the reversible oxidation of malate to oxaloacetate. The polypeptide is Malate dehydrogenase (Beijerinckia indica subsp. indica (strain ATCC 9039 / DSM 1715 / NCIMB 8712)).